Reading from the N-terminus, the 592-residue chain is ATP-dependent lipid A-core flippase (592 aa).

The next 6 membrane-spanning stretches (helical) occupy residues 31–51 (LSSFILAMVAMGVVAATEGII), 76–96 (AMLVGIAVVRGVAQFGATYFL), 134–154 (AVIFEVNQVLQVLTGVFITLV), 161–181 (LALLIFLFYTNWRLTLVVAVI), 261–281 (VTQFLAALALSVILAIAMVQA), and 288–308 (VGGFTGFVMAMLLLISPLKHL). Residues 35-317 (ILAMVAMGVV…LTDVNQPMQR (283 aa)) enclose the ABC transmembrane type-1 domain. An ABC transporter domain is found at 349 to 587 (LRFEHVTFRY…DGLYAGLHRI (239 aa)). 383 to 390 (GPSGSGKT) provides a ligand contact to ATP.

This sequence belongs to the ABC transporter superfamily. Lipid exporter (TC 3.A.1.106) family. As to quaternary structure, homodimer.

The protein resides in the cell inner membrane. It carries out the reaction ATP + H2O + lipid A-core oligosaccharideSide 1 = ADP + phosphate + lipid A-core oligosaccharideSide 2.. Involved in lipopolysaccharide (LPS) biosynthesis. Translocates lipid A-core from the inner to the outer leaflet of the inner membrane. Transmembrane domains (TMD) form a pore in the inner membrane and the ATP-binding domain (NBD) is responsible for energy generation. This Ralstonia nicotianae (strain ATCC BAA-1114 / GMI1000) (Ralstonia solanacearum) protein is ATP-dependent lipid A-core flippase.